A 399-amino-acid polypeptide reads, in one-letter code: S-adenosylmethionine synthase (399 aa).

An ATP-binding site is contributed by His17. Asp19 contacts Mg(2+). Glu52 is a K(+) binding site. L-methionine-binding residues include Glu65 and Gln109. The interval Gln109–Ala119 is flexible loop. Residues Asp177–Lys179, Lys243–Phe244, Asp252, Arg258–Lys259, Ala275, and Lys279 each bind ATP. Asp252 contacts L-methionine. Position 283 (Lys283) interacts with L-methionine.

Belongs to the AdoMet synthase family. As to quaternary structure, homotetramer; dimer of dimers. The cofactor is Mg(2+). It depends on K(+) as a cofactor.

Its subcellular location is the cytoplasm. It carries out the reaction L-methionine + ATP + H2O = S-adenosyl-L-methionine + phosphate + diphosphate. It functions in the pathway amino-acid biosynthesis; S-adenosyl-L-methionine biosynthesis; S-adenosyl-L-methionine from L-methionine: step 1/1. Catalyzes the formation of S-adenosylmethionine (AdoMet) from methionine and ATP. The overall synthetic reaction is composed of two sequential steps, AdoMet formation and the subsequent tripolyphosphate hydrolysis which occurs prior to release of AdoMet from the enzyme. In Bradyrhizobium sp. (strain ORS 278), this protein is S-adenosylmethionine synthase.